The chain runs to 257 residues: UPF0246 protein BAV2675 (257 aa).

Belongs to the UPF0246 family.

In Bordetella avium (strain 197N), this protein is UPF0246 protein BAV2675.